The following is a 395-amino-acid chain: Putative 8-amino-7-oxononanoate synthase (395 aa).

Position 23 (Arg-23) interacts with substrate. 110-111 (GY) is a binding site for pyridoxal 5'-phosphate. His-135 contacts substrate. Residues Ser-181, 206–209 (DEAH), and 237–240 (TFSK) contribute to the pyridoxal 5'-phosphate site. N6-(pyridoxal phosphate)lysine is present on Lys-240. Thr-354 is a binding site for substrate.

This sequence belongs to the class-II pyridoxal-phosphate-dependent aminotransferase family. BioF subfamily. In terms of assembly, homodimer. Pyridoxal 5'-phosphate is required as a cofactor.

The enzyme catalyses 6-carboxyhexanoyl-[ACP] + L-alanine + H(+) = (8S)-8-amino-7-oxononanoate + holo-[ACP] + CO2. It functions in the pathway cofactor biosynthesis; biotin biosynthesis. In terms of biological role, catalyzes the decarboxylative condensation of pimeloyl-[acyl-carrier protein] and L-alanine to produce 8-amino-7-oxononanoate (AON), [acyl-carrier protein], and carbon dioxide. This is Putative 8-amino-7-oxononanoate synthase (bioF) from Halalkalibacterium halodurans (strain ATCC BAA-125 / DSM 18197 / FERM 7344 / JCM 9153 / C-125) (Bacillus halodurans).